The following is a 291-amino-acid chain: S-methyl-5'-thioadenosine phosphorylase (291 aa).

Residues serine 12, 54–55, and 87–88 each bind phosphate; these read RH and SA. Methionine 185 contacts substrate. Threonine 186 is a phosphate binding site. 209–211 contributes to the substrate binding site; that stretch reads DFD.

Belongs to the PNP/MTAP phosphorylase family. MTAP subfamily. In terms of assembly, homohexamer. Dimer of a homotrimer.

It catalyses the reaction S-methyl-5'-thioadenosine + phosphate = 5-(methylsulfanyl)-alpha-D-ribose 1-phosphate + adenine. Its pathway is amino-acid biosynthesis; L-methionine biosynthesis via salvage pathway; S-methyl-5-thio-alpha-D-ribose 1-phosphate from S-methyl-5'-thioadenosine (phosphorylase route): step 1/1. Catalyzes the reversible phosphorylation of S-methyl-5'-thioadenosine (MTA) to adenine and 5-methylthioribose-1-phosphate. Involved in the breakdown of MTA, a major by-product of polyamine biosynthesis. Responsible for the first step in the methionine salvage pathway after MTA has been generated from S-adenosylmethionine. Has broad substrate specificity with 6-aminopurine nucleosides as preferred substrates. The chain is S-methyl-5'-thioadenosine phosphorylase from Bradyrhizobium diazoefficiens (strain JCM 10833 / BCRC 13528 / IAM 13628 / NBRC 14792 / USDA 110).